Here is a 259-residue protein sequence, read N- to C-terminus: Ribosomal RNA small subunit methyltransferase A (259 aa).

6 residues coordinate S-adenosyl-L-methionine: Asn12, Leu14, Gly39, Glu60, Asp84, and Asn102.

This sequence belongs to the class I-like SAM-binding methyltransferase superfamily. rRNA adenine N(6)-methyltransferase family. RsmA subfamily.

The protein localises to the cytoplasm. It carries out the reaction adenosine(1518)/adenosine(1519) in 16S rRNA + 4 S-adenosyl-L-methionine = N(6)-dimethyladenosine(1518)/N(6)-dimethyladenosine(1519) in 16S rRNA + 4 S-adenosyl-L-homocysteine + 4 H(+). Its function is as follows. Specifically dimethylates two adjacent adenosines (A1518 and A1519) in the loop of a conserved hairpin near the 3'-end of 16S rRNA in the 30S particle. May play a critical role in biogenesis of 30S subunits. This chain is Ribosomal RNA small subunit methyltransferase A, found in Nitrosospira multiformis (strain ATCC 25196 / NCIMB 11849 / C 71).